The following is a 427-amino-acid chain: tRNA(Ile)-lysidine synthase (427 aa).

21-26 (SGGADS) provides a ligand contact to ATP.

It belongs to the tRNA(Ile)-lysidine synthase family.

It is found in the cytoplasm. It carries out the reaction cytidine(34) in tRNA(Ile2) + L-lysine + ATP = lysidine(34) in tRNA(Ile2) + AMP + diphosphate + H(+). Ligates lysine onto the cytidine present at position 34 of the AUA codon-specific tRNA(Ile) that contains the anticodon CAU, in an ATP-dependent manner. Cytidine is converted to lysidine, thus changing the amino acid specificity of the tRNA from methionine to isoleucine. The sequence is that of tRNA(Ile)-lysidine synthase from Actinobacillus succinogenes (strain ATCC 55618 / DSM 22257 / CCUG 43843 / 130Z).